We begin with the raw amino-acid sequence, 246 residues long: Small ribosomal subunit protein uS2 (246 aa).

The protein belongs to the universal ribosomal protein uS2 family.

This Azotobacter vinelandii (strain DJ / ATCC BAA-1303) protein is Small ribosomal subunit protein uS2.